The chain runs to 198 residues: Recombination protein RecR (198 aa).

The C4-type zinc finger occupies 57–72 (CSICGNLTESDPCAIC). The region spanning 80-175 (TTILVVEESK…KVTRLARGLA (96 aa)) is the Toprim domain.

It belongs to the RecR family.

In terms of biological role, may play a role in DNA repair. It seems to be involved in an RecBC-independent recombinational process of DNA repair. It may act with RecF and RecO. The chain is Recombination protein RecR from Lactococcus lactis subsp. cremoris (strain MG1363).